The chain runs to 471 residues: Siroheme synthase (471 aa).

Residues 1–203 (MDYLPLFADI…GDWESAEKTL (203 aa)) form a precorrin-2 dehydrogenase /sirohydrochlorin ferrochelatase region. Residues 22–23 (EV) and 43–44 (KN) contribute to the NAD(+) site. A Phosphoserine modification is found at Ser-128. Positions 215 to 471 (GEIILVGAGP…DTKSSLINLA (257 aa)) are uroporphyrinogen-III C-methyltransferase. Pro-224 contacts S-adenosyl-L-methionine. The Proton acceptor role is filled by Asp-247. Lys-269 acts as the Proton donor in catalysis. S-adenosyl-L-methionine contacts are provided by residues 300 to 302 (GGD), Ile-305, 330 to 331 (TA), Met-382, and Ala-411.

It in the N-terminal section; belongs to the precorrin-2 dehydrogenase / sirohydrochlorin ferrochelatase family. The protein in the C-terminal section; belongs to the precorrin methyltransferase family.

The catalysed reaction is uroporphyrinogen III + 2 S-adenosyl-L-methionine = precorrin-2 + 2 S-adenosyl-L-homocysteine + H(+). It carries out the reaction precorrin-2 + NAD(+) = sirohydrochlorin + NADH + 2 H(+). The enzyme catalyses siroheme + 2 H(+) = sirohydrochlorin + Fe(2+). It participates in cofactor biosynthesis; adenosylcobalamin biosynthesis; precorrin-2 from uroporphyrinogen III: step 1/1. It functions in the pathway cofactor biosynthesis; adenosylcobalamin biosynthesis; sirohydrochlorin from precorrin-2: step 1/1. The protein operates within porphyrin-containing compound metabolism; siroheme biosynthesis; precorrin-2 from uroporphyrinogen III: step 1/1. Its pathway is porphyrin-containing compound metabolism; siroheme biosynthesis; siroheme from sirohydrochlorin: step 1/1. It participates in porphyrin-containing compound metabolism; siroheme biosynthesis; sirohydrochlorin from precorrin-2: step 1/1. In terms of biological role, multifunctional enzyme that catalyzes the SAM-dependent methylations of uroporphyrinogen III at position C-2 and C-7 to form precorrin-2 via precorrin-1. Then it catalyzes the NAD-dependent ring dehydrogenation of precorrin-2 to yield sirohydrochlorin. Finally, it catalyzes the ferrochelation of sirohydrochlorin to yield siroheme. The chain is Siroheme synthase from Zymomonas mobilis subsp. mobilis (strain ATCC 31821 / ZM4 / CP4).